The sequence spans 193 residues: Ectoine TRAP transporter small permease protein TeaB (193 aa).

4 helical membrane passes run 33–55 (ILAL…RFAL), 65–82 (VNRI…GYAA), 103–125 (RALM…YYSV), and 145–167 (IFII…LFTA).

Belongs to the TRAP transporter small permease family. In terms of assembly, the complex comprises the extracytoplasmic solute receptor protein TeaA, and the two transmembrane proteins TeaB and TeaC.

It is found in the cell inner membrane. Its function is as follows. Part of the tripartite ATP-independent periplasmic (TRAP) transport system TeaABC involved in the uptake of ectoine and hydroxyectoine in response to osmotic upshock. Probably functions as a recovery system for synthesized ectoine that leaks out of the cell. In Halomonas elongata (strain ATCC 33173 / DSM 2581 / NBRC 15536 / NCIMB 2198 / 1H9), this protein is Ectoine TRAP transporter small permease protein TeaB (teaB).